The following is a 119-amino-acid chain: Large ribosomal subunit protein uL14 (119 aa).

Belongs to the universal ribosomal protein uL14 family. Part of the 50S ribosomal subunit. Forms a cluster with proteins L3 and L19. In the 70S ribosome, L14 and L19 interact and together make contacts with the 16S rRNA in bridges B5 and B8.

Functionally, binds to 23S rRNA. Forms part of two intersubunit bridges in the 70S ribosome. The chain is Large ribosomal subunit protein uL14 from Anaplasma phagocytophilum (strain HZ).